The primary structure comprises 929 residues: Type I restriction enzyme SauCOLORF180P endonuclease subunit (929 aa).

The Helicase ATP-binding domain occupies 254–418 (QQATETGNNG…DGRTTADIFG (165 aa)). An ATP-binding site is contributed by 268 to 274 (TTGSGKT).

This sequence belongs to the HsdR family. The type I restriction/modification system is composed of three polypeptides R, M and S.

The catalysed reaction is Endonucleolytic cleavage of DNA to give random double-stranded fragments with terminal 5'-phosphates, ATP is simultaneously hydrolyzed.. In terms of biological role, the restriction (R) subunit of a type I restriction enzyme that recognizes an undetermined sequence and cleaves a random distance away. Subunit R is required for both nuclease and ATPase activities, but not for modification. After locating a non-methylated recognition site, the enzyme complex serves as a molecular motor that translocates DNA in an ATP-dependent manner until a collision occurs that triggers cleavage. This Staphylococcus aureus (strain COL) protein is Type I restriction enzyme SauCOLORF180P endonuclease subunit.